A 140-amino-acid chain; its full sequence is Small ribosomal subunit protein bS6 (140 aa).

The interval 111 to 140 (EHFTGPAGAEGSDDESTESTDEAVAETADA) is disordered. The segment covering 121-140 (GSDDESTESTDEAVAETADA) has biased composition (acidic residues).

It belongs to the bacterial ribosomal protein bS6 family.

Its function is as follows. Binds together with bS18 to 16S ribosomal RNA. The sequence is that of Small ribosomal subunit protein bS6 from Rhodopirellula baltica (strain DSM 10527 / NCIMB 13988 / SH1).